A 152-amino-acid chain; its full sequence is Antiholin-like protein LrgA (152 aa).

4 helical membrane passes run 23 to 43 (YSIFQQALTIAVILLISKIIE), 45 to 65 (FMPIPMPASVIGLVLLFIALC), 77 to 97 (VGTALTNNIGFLFVPAGISVI), and 108 to 128 (ILIILLIIISTLLLLICTGFA).

The protein belongs to the CidA/LrgA family. LrgA subfamily.

The protein localises to the cell membrane. Its function is as follows. Inhibits the expression or activity of extracellular murein hydrolases by interacting, possibly with LrgB, with the holin-like proteins CidA and/or CidB. The LrgAB and CidAB proteins may affect the proton motive force of the membrane. May be involved in programmed cell death (PCD), possibly triggering PCD in response to antibiotics and environmental stresses. The sequence is that of Antiholin-like protein LrgA from Staphylococcus epidermidis (strain ATCC 35984 / DSM 28319 / BCRC 17069 / CCUG 31568 / BM 3577 / RP62A).